The chain runs to 477 residues: UDP-N-acetylglucosamine pyrophosphorylase (477 aa).

A Substrate binding motif is present at residues 109-112; it reads MAGG. UTP contacts are provided by residues 109–112, K123, and Q194; that span reads MAGG. The residue at position 218 (S218) is a Phosphoserine. Position 221 (G221) interacts with UTP. A substrate-binding site is contributed by N222. D252 is a UTP binding site. The short motif at 302–303 is the Substrate binding element; the sequence is EY. K377 contacts UTP. K409 provides a ligand contact to substrate. S461 is subject to Phosphoserine.

Belongs to the UDPGP type 1 family.

The protein resides in the cytoplasm. It catalyses the reaction N-acetyl-alpha-D-glucosamine 1-phosphate + UTP + H(+) = UDP-N-acetyl-alpha-D-glucosamine + diphosphate. It participates in nucleotide-sugar biosynthesis; UDP-N-acetyl-alpha-D-glucosamine biosynthesis; UDP-N-acetyl-alpha-D-glucosamine from N-acetyl-alpha-D-glucosamine 1-phosphate: step 1/1. In terms of biological role, UDP-N-acetylglucosamine pyrophosphorylase that utilizes N-acetylglucosamine-1-phosphate as substrate. Together with AGM1, is involved in the production of UDP-N-acetylglucosamine from N-acetylglucosamine-6-phosphate. The polypeptide is UDP-N-acetylglucosamine pyrophosphorylase (QRI1) (Saccharomyces cerevisiae (strain ATCC 204508 / S288c) (Baker's yeast)).